The chain runs to 578 residues: NADH-quinone oxidoreductase subunit C/D (578 aa).

The NADH dehydrogenase I subunit C stretch occupies residues 1-167 (MILSLFKLFG…DEFYFTKQKE (167 aa)). An NADH dehydrogenase I subunit D region spans residues 192–578 (EYMFLNFGPN…IDFVMSDVDR (387 aa)).

The protein in the N-terminal section; belongs to the complex I 30 kDa subunit family. In the C-terminal section; belongs to the complex I 49 kDa subunit family. In terms of assembly, NDH-1 is composed of 13 different subunits. Subunits NuoB, CD, E, F, and G constitute the peripheral sector of the complex.

The protein localises to the cell inner membrane. It carries out the reaction a quinone + NADH + 5 H(+)(in) = a quinol + NAD(+) + 4 H(+)(out). Functionally, NDH-1 shuttles electrons from NADH, via FMN and iron-sulfur (Fe-S) centers, to quinones in the respiratory chain. The immediate electron acceptor for the enzyme in this species is believed to be ubiquinone. Couples the redox reaction to proton translocation (for every two electrons transferred, four hydrogen ions are translocated across the cytoplasmic membrane), and thus conserves the redox energy in a proton gradient. This chain is NADH-quinone oxidoreductase subunit C/D, found in Buchnera aphidicola subsp. Cinara cedri (strain Cc).